Consider the following 447-residue polypeptide: MTTILKHLPVGQRIGIAFSGGLDTSAALLWMRQKGAVPYAYTANLGQPDEEDYDAIPRRAMEYGAENARLIDCRKQLVAEGIAAIQCGAFHNTTGGLTYFNTTPLGRAVSGTMLVAAMKEDGVNIWGDGSTYKGNDIERFYRYGLLTNAELQIYKPWLDTDFIDELGGRHEMSEFMIACGFDYKMSVEKAYSTDSNMLGATHEAKDLEYLNSSVKIVNPIMGVKFWDESVKIPAEEVTVRFEQGHPVALNGKTFSDDVEMMLEANRIGGRHGLGMSDQIENRIIEAKSRGIYEAPGMALLHIAYERLLTGIHNEDTIEQYHAHGRQLGRLLYQGRWFDSQALMLRDSLQRWVASQITGEVTLELRRGNDYSILNTVSENLTYKPERLTMEKGDSVFSPDDRIGQLTMRNLDITDTREKLFGYAKTGLLSSSAASGVPQVENLENKGQ.

ATP-binding positions include 17-25 (AFSGGLDTS) and Ala43. L-citrulline is bound at residue Tyr99. 2 residues coordinate ATP: Gly129 and Thr131. The L-aspartate site is built by Thr131, Asn135, and Asp136. Asn135 is an L-citrulline binding site. Asp136 lines the ATP pocket. L-citrulline contacts are provided by Arg139 and Ser192. ATP is bound at residue Asp194. 3 residues coordinate L-citrulline: Thr201, Glu203, and Glu280.

This sequence belongs to the argininosuccinate synthase family. Type 2 subfamily. Homotetramer.

Its subcellular location is the cytoplasm. It catalyses the reaction L-citrulline + L-aspartate + ATP = 2-(N(omega)-L-arginino)succinate + AMP + diphosphate + H(+). The protein operates within amino-acid biosynthesis; L-arginine biosynthesis; L-arginine from L-ornithine and carbamoyl phosphate: step 2/3. The protein is Argininosuccinate synthase of Escherichia coli O127:H6 (strain E2348/69 / EPEC).